The following is a 167-amino-acid chain: Thiol peroxidase (167 aa).

The region spanning 18–167 is the Thioredoxin domain; sequence VKVGDQAPDF…PIEAAKALVK (150 aa). Cysteine 60 acts as the Cysteine sulfenic acid (-SOH) intermediate in catalysis. Cysteine 60 and cysteine 94 are oxidised to a cystine.

This sequence belongs to the peroxiredoxin family. Tpx subfamily. As to quaternary structure, homodimer.

The enzyme catalyses a hydroperoxide + [thioredoxin]-dithiol = an alcohol + [thioredoxin]-disulfide + H2O. In terms of biological role, thiol-specific peroxidase that catalyzes the reduction of hydrogen peroxide and organic hydroperoxides to water and alcohols, respectively. Plays a role in cell protection against oxidative stress by detoxifying peroxides. The chain is Thiol peroxidase from Bacillus subtilis (strain 168).